The following is a 155-amino-acid chain: UPF0461 protein C5orf24 homolog (155 aa).

The span at 60 to 69 (NETHLQTSTS) shows a compositional bias: polar residues. The disordered stretch occupies residues 60 to 155 (NETHLQTSTS…QQALMCSSDA (96 aa)). Basic residues predominate over residues 78-92 (LKKKKNVGRSGKRGR). Polar residues predominate over residues 94–107 (SGTTKSAGYRTSTG).

Belongs to the UPF0461 family.

This chain is UPF0461 protein C5orf24 homolog, found in Xenopus laevis (African clawed frog).